An 87-amino-acid chain; its full sequence is Small ribosomal subunit protein uS17 (87 aa).

The protein belongs to the universal ribosomal protein uS17 family. As to quaternary structure, part of the 30S ribosomal subunit.

Functionally, one of the primary rRNA binding proteins, it binds specifically to the 5'-end of 16S ribosomal RNA. In Thiobacillus denitrificans (strain ATCC 25259 / T1), this protein is Small ribosomal subunit protein uS17.